A 628-amino-acid polypeptide reads, in one-letter code: Alpha pinene synthase, chloroplastic (628 aa).

The transit peptide at 1–46 directs the protein to the chloroplast; it reads MSLGCITPLASAMVGPKLVRPLIHHNPLFHHKPLNRPYLQTKIPLR. Residues aspartate 381, aspartate 385, and glutamate 532 each coordinate Mg(2+). The DDXXD motif signature appears at 381–385; that stretch reads DDMYD.

It belongs to the terpene synthase family. Tpsa subfamily. Mg(2+) is required as a cofactor. It depends on Mn(2+) as a cofactor.

The protein resides in the plastid. The protein localises to the chloroplast. The catalysed reaction is (2E)-geranyl diphosphate = alpha-pinene + diphosphate. It participates in secondary metabolite biosynthesis; terpenoid biosynthesis. Functionally, monoterpene synthase involved in the biosynthesis of volatile compounds. Mediates the conversion of (2E)-geranyl diphosphate (GPP) into alpha-pinene. The chain is Alpha pinene synthase, chloroplastic from Chamaecyparis formosensis (Formosan cypress).